A 364-amino-acid chain; its full sequence is Methylthioribose-1-phosphate isomerase (364 aa).

Asp246 serves as the catalytic Proton donor.

Belongs to the eIF-2B alpha/beta/delta subunits family. MtnA subfamily.

The protein resides in the cytoplasm. Its subcellular location is the nucleus. It carries out the reaction 5-(methylsulfanyl)-alpha-D-ribose 1-phosphate = 5-(methylsulfanyl)-D-ribulose 1-phosphate. The protein operates within amino-acid biosynthesis; L-methionine biosynthesis via salvage pathway; L-methionine from S-methyl-5-thio-alpha-D-ribose 1-phosphate: step 1/6. Catalyzes the interconversion of methylthioribose-1-phosphate (MTR-1-P) into methylthioribulose-1-phosphate (MTRu-1-P). This Bombyx mori (Silk moth) protein is Methylthioribose-1-phosphate isomerase.